Consider the following 255-residue polypeptide: Aliphatic sulfonates import ATP-binding protein SsuB (255 aa).

One can recognise an ABC transporter domain in the interval 5-231 (IRVNEKAFGK…PRSRTSPVFQ (227 aa)). 39-46 (GPSGCGKS) is an ATP binding site.

Belongs to the ABC transporter superfamily. Aliphatic sulfonates importer (TC 3.A.1.17.2) family. In terms of assembly, the complex is composed of two ATP-binding proteins (SsuB), two transmembrane proteins (SsuC) and a solute-binding protein (SsuA).

It localises to the cell membrane. It catalyses the reaction ATP + H2O + aliphatic sulfonate-[sulfonate-binding protein]Side 1 = ADP + phosphate + aliphatic sulfonateSide 2 + [sulfonate-binding protein]Side 1.. Its function is as follows. Part of the ABC transporter complex SsuABC involved in aliphatic sulfonates import. Responsible for energy coupling to the transport system. The protein is Aliphatic sulfonates import ATP-binding protein SsuB of Bacillus licheniformis (strain ATCC 14580 / DSM 13 / JCM 2505 / CCUG 7422 / NBRC 12200 / NCIMB 9375 / NCTC 10341 / NRRL NRS-1264 / Gibson 46).